The primary structure comprises 158 residues: NADPH-dependent 7-cyano-7-deazaguanine reductase (158 aa).

The active-site Thioimide intermediate is the Cys56. The active-site Proton donor is Asp63. Residues 78–80 (LES) and 97–98 (HE) contribute to the substrate site.

This sequence belongs to the GTP cyclohydrolase I family. QueF type 1 subfamily.

Its subcellular location is the cytoplasm. It carries out the reaction 7-aminomethyl-7-carbaguanine + 2 NADP(+) = 7-cyano-7-deazaguanine + 2 NADPH + 3 H(+). The protein operates within tRNA modification; tRNA-queuosine biosynthesis. Its function is as follows. Catalyzes the NADPH-dependent reduction of 7-cyano-7-deazaguanine (preQ0) to 7-aminomethyl-7-deazaguanine (preQ1). The chain is NADPH-dependent 7-cyano-7-deazaguanine reductase from Nitrobacter winogradskyi (strain ATCC 25391 / DSM 10237 / CIP 104748 / NCIMB 11846 / Nb-255).